Consider the following 212-residue polypeptide: uncharacterized protein (212 aa).

The helical transmembrane segment at 11–31 threads the bilayer; sequence NLIFFQFIVYFFFISLTILII.

The protein resides in the membrane. This is an uncharacterized protein from Rickettsia prowazekii (strain Madrid E).